The chain runs to 639 residues: Chaperone protein DnaK (639 aa).

Threonine 195 is subject to Phosphothreonine; by autocatalysis. A compositionally biased stretch (low complexity) spans 601–618 (NAAAGAAPAGEPAPGEPQ). Residues 601 to 639 (NAAAGAAPAGEPAPGEPQAEQKKDDGVIDAEYVDVDEKK) form a disordered region. Positions 627 to 639 (VIDAEYVDVDEKK) are enriched in acidic residues.

The protein belongs to the heat shock protein 70 family.

Functionally, acts as a chaperone. The sequence is that of Chaperone protein DnaK from Acidobacterium capsulatum (strain ATCC 51196 / DSM 11244 / BCRC 80197 / JCM 7670 / NBRC 15755 / NCIMB 13165 / 161).